A 418-amino-acid chain; its full sequence is 6-methylpretetramide 4-monooxygenase (418 aa).

Residues 15–44 (DVCVVGGGPAGLTLALLMLRSGARVTLVER) and 289–299 (WARDGLLLIGD) each bind FAD.

This sequence belongs to the PheA/TfdB FAD monooxygenase family. The cofactor is FAD.

The catalysed reaction is 6-methylpretetramide + NADPH + O2 + 2 H(+) = 4-hydroxy-6-methylpretetramide + NADP(+) + H2O. It functions in the pathway antibiotic biosynthesis; oxytetracycline biosynthesis. Involved in the biosynthesis of the tetracycline antibiotic, oxytetracycline. Catalyzes the C-4 hydroxylation of 6-methylpretetramide to yield the intermediate 4-hydroxyl-6-methylpretetramid, which is subsequently hydroxylated by OxyL to yield 4-keto-anhydrotetracycline. OxyE serves as the ancillary enzyme to assist OxyL in the hydroxylation of C-4. In Streptomyces rimosus, this protein is 6-methylpretetramide 4-monooxygenase.